We begin with the raw amino-acid sequence, 575 residues long: Dual specificity protein phosphatase YVH1 (575 aa).

The disordered stretch occupies residues Lys-185–Lys-213. Residues Asn-187–Asn-208 are compositionally biased toward low complexity. The Tyrosine-protein phosphatase domain occupies Asn-283–Thr-435. Cys-379 functions as the Phosphocysteine intermediate in the catalytic mechanism. Zn(2+) contacts are provided by Cys-476 and Cys-530.

It belongs to the protein-tyrosine phosphatase family. Non-receptor class dual specificity subfamily. As to quaternary structure, interacts with PES. The cofactor is Zn(2+).

It localises to the cytoplasm. The protein localises to the nucleus. The catalysed reaction is O-phospho-L-tyrosyl-[protein] + H2O = L-tyrosyl-[protein] + phosphate. It carries out the reaction O-phospho-L-seryl-[protein] + H2O = L-seryl-[protein] + phosphate. Its function is as follows. Dual specificity protein phosphatase which dephosphorylates both phosphotyrosine and phosphoserine residues. The chain is Dual specificity protein phosphatase YVH1 from Plasmodium falciparum (isolate 3D7).